A 474-amino-acid chain; its full sequence is Chromosomal replication initiator protein DnaA (474 aa).

Residues 1-73 (MTNIEQERWS…LSCWQAEMPE (73 aa)) are domain I, interacts with DnaA modulators. The interval 73-130 (EVHRIDLTVRTAMRCAAPAKEQAAPIEPRREDNRAAAHDLRVSATAPVSANHEALGGS) is domain II. Residues 131–353 (PLDPRLTFSS…GAINRLLAHS (223 aa)) are domain III, AAA+ region. Residues Gly-178, Gly-180, Lys-181, and Thr-182 each contribute to the ATP site. The interval 354-474 (KLNAQPVTLE…VESLKRQLQE (121 aa)) is domain IV, binds dsDNA.

The protein belongs to the DnaA family. As to quaternary structure, oligomerizes as a right-handed, spiral filament on DNA at oriC.

Its subcellular location is the cytoplasm. Plays an essential role in the initiation and regulation of chromosomal replication. ATP-DnaA binds to the origin of replication (oriC) to initiate formation of the DNA replication initiation complex once per cell cycle. Binds the DnaA box (a 9 base pair repeat at the origin) and separates the double-stranded (ds)DNA. Forms a right-handed helical filament on oriC DNA; dsDNA binds to the exterior of the filament while single-stranded (ss)DNA is stabiized in the filament's interior. The ATP-DnaA-oriC complex binds and stabilizes one strand of the AT-rich DNA unwinding element (DUE), permitting loading of DNA polymerase. After initiation quickly degrades to an ADP-DnaA complex that is not apt for DNA replication. Binds acidic phospholipids. The chain is Chromosomal replication initiator protein DnaA from Rhodopseudomonas palustris (strain BisA53).